Consider the following 397-residue polypeptide: L-cysteine desulfidase (397 aa).

Cysteine 23 (proton acceptor) is an active-site residue. The [4Fe-4S] cluster site is built by cysteine 288, cysteine 330, and cysteine 337.

It belongs to the L-cysteine desulfidase family. As to quaternary structure, homotrimer. [4Fe-4S] cluster serves as cofactor.

The enzyme catalyses L-cysteine + H2O = hydrogen sulfide + pyruvate + NH4(+) + H(+). In terms of biological role, catalyzes the cleavage of L-cysteine to form 2-aminoprop-2-enoate and sulfide. The former then spontaneously hydrolyzes to pyruvate and NH(3). May be responsible for the production of sulfide required for the biosynthesis of iron-sulfur centers in this archaea. The chain is L-cysteine desulfidase from Methanococcus maripaludis (strain C5 / ATCC BAA-1333).